The chain runs to 289 residues: MIRFLVLSLLILTLFLTTPAVEGDVSFRLSGATSSSYGVFISNLRKALPNERKLYDIPLLRSSLPGSQRYALIHLTNYADETISVAIDVTNVYIMGYRAGDTSYFFNEASATEAAKYVFKDAMRKVTLPYSGNYERLQTAAGKIRENIPLGLPALDSAITTLFYYNANSAASALMVLIQSTSEAARYKFIEQQIGKRVDKTFLPSLAIISLENSWSALSKQIQIASTNNGQFESPVVLINAQNQRVTITNVDAGVVTSNIALLLNRNNMAAMDDDVPMTQSFGCGSYAI.

An N-terminal signal peptide occupies residues 1–23 (MIRFLVLSLLILTLFLTTPAVEG). Glu-183 is a catalytic residue. Positions 271-289 (AMDDDVPMTQSFGCGSYAI) are cleaved as a propeptide — removed in mature form.

Belongs to the ribosome-inactivating protein family. Type 1 RIP subfamily.

It carries out the reaction Endohydrolysis of the N-glycosidic bond at one specific adenosine on the 28S rRNA.. In terms of biological role, inactivates eukaryotic 60S ribosomal subunits. This is Ribosome-inactivating protein alpha-trichosanthin from Trichosanthes kirilowii (Chinese snake gourd).